The sequence spans 281 residues: Bis(5'-nucleosyl)-tetraphosphatase, symmetrical (281 aa).

Belongs to the Ap4A hydrolase family.

It carries out the reaction P(1),P(4)-bis(5'-adenosyl) tetraphosphate + H2O = 2 ADP + 2 H(+). In terms of biological role, hydrolyzes diadenosine 5',5'''-P1,P4-tetraphosphate to yield ADP. This chain is Bis(5'-nucleosyl)-tetraphosphatase, symmetrical, found in Acidovorax sp. (strain JS42).